A 97-amino-acid polypeptide reads, in one-letter code: MAKTATPGACASDPGSGPLPENYEMALAELEALVARMEGGTLSLEDSLAAYRRGAALVAFCQQQLEKAEQQVRVLDGASLKPLSAGTAAADGEDDDL.

The segment at 1-21 (MAKTATPGACASDPGSGPLPE) is disordered.

This sequence belongs to the XseB family. In terms of assembly, heterooligomer composed of large and small subunits.

It is found in the cytoplasm. It catalyses the reaction Exonucleolytic cleavage in either 5'- to 3'- or 3'- to 5'-direction to yield nucleoside 5'-phosphates.. Its function is as follows. Bidirectionally degrades single-stranded DNA into large acid-insoluble oligonucleotides, which are then degraded further into small acid-soluble oligonucleotides. The protein is Exodeoxyribonuclease 7 small subunit of Burkholderia mallei (strain NCTC 10247).